A 228-amino-acid polypeptide reads, in one-letter code: uncharacterized protein (228 aa).

An N-terminal signal peptide occupies residues 1-15 (MKQKYLFIASMALAG). Cysteine 16 is lipidated: N-palmitoyl cysteine. Cysteine 16 carries S-diacylglycerol cysteine lipidation.

To P.multocida PM0015.

The protein resides in the cell membrane. This is an uncharacterized protein from Pasteurella multocida (strain Pm70).